A 204-amino-acid chain; its full sequence is Guanylate kinase (204 aa).

The 180-residue stretch at 5 to 184 (GLLIVLSGPS…ACDKIKAIVL (180 aa)) folds into the Guanylate kinase-like domain. 12–19 (GPSGVGKG) is an ATP binding site.

The protein belongs to the guanylate kinase family.

It is found in the cytoplasm. The catalysed reaction is GMP + ATP = GDP + ADP. Its function is as follows. Essential for recycling GMP and indirectly, cGMP. The chain is Guanylate kinase (gmk) from Bacillus subtilis (strain 168).